The chain runs to 669 residues: DNA ligase (669 aa).

NAD(+) is bound by residues 34 to 38 (DAEYD), 83 to 84 (SL), and glutamate 114. Catalysis depends on lysine 116, which acts as the N6-AMP-lysine intermediate. 4 residues coordinate NAD(+): arginine 137, glutamate 171, lysine 287, and lysine 311. Cysteine 405, cysteine 408, cysteine 423, and cysteine 428 together coordinate Zn(2+). The region spanning 591-669 (NVESYFAGKT…EERFLQELNK (79 aa)) is the BRCT domain.

The protein belongs to the NAD-dependent DNA ligase family. LigA subfamily. It depends on Mg(2+) as a cofactor. Mn(2+) serves as cofactor.

It carries out the reaction NAD(+) + (deoxyribonucleotide)n-3'-hydroxyl + 5'-phospho-(deoxyribonucleotide)m = (deoxyribonucleotide)n+m + AMP + beta-nicotinamide D-nucleotide.. DNA ligase that catalyzes the formation of phosphodiester linkages between 5'-phosphoryl and 3'-hydroxyl groups in double-stranded DNA using NAD as a coenzyme and as the energy source for the reaction. It is essential for DNA replication and repair of damaged DNA. This is DNA ligase from Bacillus cereus (strain G9842).